Here is a 154-residue protein sequence, read N- to C-terminus: Urease accessory protein UreE (154 aa).

Residues 135–154 (PENGAYHGTGGHHHHHHDHE) form a disordered region. A compositionally biased stretch (basic residues) spans 144 to 154 (GGHHHHHHDHE).

This sequence belongs to the UreE family.

It is found in the cytoplasm. Functionally, involved in urease metallocenter assembly. Binds nickel. Probably functions as a nickel donor during metallocenter assembly. This is Urease accessory protein UreE from Teredinibacter turnerae (strain ATCC 39867 / T7901).